A 136-amino-acid chain; its full sequence is Glutamate-rich protein 4 (136 aa).

Residues glutamate 92–isoleucine 136 are disordered. Basic and acidic residues predominate over residues glutamate 101 to arginine 121.

This Mus musculus (Mouse) protein is Glutamate-rich protein 4 (Erich4).